The following is a 347-amino-acid chain: F-box protein At2g14500 (347 aa).

The region spanning 6-52 (PLTLSELPHDLLRNIFNRLSFADFHRATWNSISKQTAPPKTKSPWLI) is the F-box domain.

The chain is F-box protein At2g14500 from Arabidopsis thaliana (Mouse-ear cress).